A 102-amino-acid polypeptide reads, in one-letter code: Small ribosomal subunit protein uS10 (102 aa).

It belongs to the universal ribosomal protein uS10 family. Part of the 30S ribosomal subunit.

Functionally, involved in the binding of tRNA to the ribosomes. In Methanothrix thermoacetophila (strain DSM 6194 / JCM 14653 / NBRC 101360 / PT) (Methanosaeta thermophila), this protein is Small ribosomal subunit protein uS10.